Here is a 209-residue protein sequence, read N- to C-terminus: MTYCSKANQPSYPFILPDLPYDKESFKPHFTRETFDYHHGKHHNSYVQNLNNLIKDREELQKKDLEEIIEWSSQNAEVAILNNASQIWNHTFFWYSIKPHGGGKPSGKVFEQISKDFGSFEQFCAQFKQEAVGQFGSGWTWVVYHDNKLQIIKTSNAGTPIVNFMKPILACDVWEHAYYIDYRNKRSDYIDIFIRHMINWKFVEDNLIQ.

4 residues coordinate Fe(3+): histidine 38, histidine 90, aspartate 172, and histidine 176. Histidine 38, histidine 90, aspartate 172, and histidine 176 together coordinate Mn(2+).

Belongs to the iron/manganese superoxide dismutase family. Requires Mn(2+) as cofactor. Fe(3+) is required as a cofactor.

The catalysed reaction is 2 superoxide + 2 H(+) = H2O2 + O2. Its function is as follows. Destroys superoxide anion radicals which are normally produced within the cells and which are toxic to biological systems. Catalyzes the dismutation of superoxide anion radicals into O2 and H2O2 by successive reduction and oxidation of the transition metal ion at the active site. In Rickettsia prowazekii (strain Madrid E), this protein is Superoxide dismutase [Mn/Fe] (sodB).